An 802-amino-acid chain; its full sequence is Putative flavin carrier protein 3 (802 aa).

A signal peptide spans M1–A28. The Lumenal portion of the chain corresponds to K29 to Q169. Residue N149 is glycosylated (N-linked (GlcNAc...) asparagine). A helical membrane pass occupies residues I170–L190. Topologically, residues S191–S200 are cytoplasmic. A helical transmembrane segment spans residues H201–M221. The Lumenal portion of the chain corresponds to Q222–P229. A helical transmembrane segment spans residues I230–M250. At Q251–R255 the chain is on the cytoplasmic side. The chain crosses the membrane as a helical span at residues W256 to A278. Residues Q279–S323 are Lumenal-facing. N-linked (GlcNAc...) asparagine glycosylation is present at N321. The helical transmembrane segment at I324–I344 threads the bilayer. Topologically, residues V345–G377 are cytoplasmic. Residues A378 to F398 traverse the membrane as a helical segment. Residues T399–A405 are Lumenal-facing. The chain crosses the membrane as a helical span at residues V406–W426. Residues R427–H467 lie on the Cytoplasmic side of the membrane. Residues Y468–A488 form a helical membrane-spanning segment. The Lumenal segment spans residues Q489–Q495. The chain crosses the membrane as a helical span at residues V496 to Y516. The Cytoplasmic segment spans residues L517–N525. The chain crosses the membrane as a helical span at residues I526–F546. The N-linked (GlcNAc...) asparagine glycan is linked to N547. Over N547–G557 the chain is Lumenal. A helical membrane pass occupies residues W558–F578. Topologically, residues A579–M802 are cytoplasmic. 2 positions are modified to phosphoserine: S616 and S635. The disordered stretch occupies residues K629–M802. 3 stretches are compositionally biased toward polar residues: residues D653 to S663, K697 to G717, and D761 to Q788. S779 and S782 each carry phosphoserine.

It belongs to the transient receptor potential (TRP) ion channel family.

Its subcellular location is the endoplasmic reticulum membrane. Functionally, may be responsible for the transport of FAD into the endoplasmic reticulum lumen, where it is required for oxidative protein folding. The protein is Putative flavin carrier protein 3 (FLC3) of Saccharomyces cerevisiae (strain ATCC 204508 / S288c) (Baker's yeast).